Reading from the N-terminus, the 120-residue chain is NAD(P)H-quinone oxidoreductase subunit 3, chloroplastic (120 aa).

3 consecutive transmembrane segments (helical) span residues 9-29 (IFWA…IISG), 64-84 (MFAL…PWAM), and 88-108 (VLGV…IVGS).

Belongs to the complex I subunit 3 family. As to quaternary structure, NDH is composed of at least 16 different subunits, 5 of which are encoded in the nucleus.

Its subcellular location is the plastid. It is found in the chloroplast thylakoid membrane. The enzyme catalyses a plastoquinone + NADH + (n+1) H(+)(in) = a plastoquinol + NAD(+) + n H(+)(out). It carries out the reaction a plastoquinone + NADPH + (n+1) H(+)(in) = a plastoquinol + NADP(+) + n H(+)(out). In terms of biological role, NDH shuttles electrons from NAD(P)H:plastoquinone, via FMN and iron-sulfur (Fe-S) centers, to quinones in the photosynthetic chain and possibly in a chloroplast respiratory chain. The immediate electron acceptor for the enzyme in this species is believed to be plastoquinone. Couples the redox reaction to proton translocation, and thus conserves the redox energy in a proton gradient. In Lemna minor (Common duckweed), this protein is NAD(P)H-quinone oxidoreductase subunit 3, chloroplastic.